A 410-amino-acid polypeptide reads, in one-letter code: Neuroserpin (410 aa).

A signal peptide spans 1–16 (MAYLGLLSLVALQSLV). S83 is modified (phosphoserine). N-linked (GlcNAc...) asparagine glycans are attached at residues N157, N321, and N401. A glycan (O-linked (Xyl...) (chondroitin sulfate) serine) is linked at S403.

Belongs to the serpin family. In terms of tissue distribution, detected in adult pituitary and adrenal gland.

The protein resides in the secreted. Its subcellular location is the cytoplasmic vesicle. It is found in the secretory vesicle lumen. The protein localises to the perikaryon. In terms of biological role, serine protease inhibitor that inhibits plasminogen activators and plasmin but not thrombin. May be involved in the formation or reorganization of synaptic connections as well as for synaptic plasticity in the adult nervous system. May protect neurons from cell damage by tissue-type plasminogen activator. The protein is Neuroserpin (Serpini1) of Rattus norvegicus (Rat).